A 391-amino-acid chain; its full sequence is uncharacterized protein (391 aa).

The N-terminal stretch at 1–20 (MRKLFLLSILMIGVIVAFAG) is a signal peptide. C21 is lipidated: S-archaeol cysteine. Residues 104–377 (RIVTDFYCPI…DFAKMIHPEL (274 aa)) form the Fe/B12 periplasmic-binding domain.

It localises to the cell membrane. This is an uncharacterized protein from Methanocaldococcus jannaschii (strain ATCC 43067 / DSM 2661 / JAL-1 / JCM 10045 / NBRC 100440) (Methanococcus jannaschii).